A 1756-amino-acid chain; its full sequence is Periplakin (1756 aa).

Serine 14 carries the phosphoserine modification. Coiled-coil stretches lie at residues 16-125 (TVQT…KQIY) and 188-389 (KEQN…QQVV). Spectrin repeat units lie at residues 216 to 317 (QDYM…SHLK), 323 to 485 (HQFH…RTLQ), 505 to 612 (RQLL…EKVD), and 733 to 861 (EHFH…QNLE). In terms of domain architecture, SH3 spans 399 to 455 (LKPIPVEALCDFEGEQGLISRGYSYTLQKNNGESWELMDSAGNKLIAPAVCFVIPPT). A Phosphoserine modification is found at serine 465. Coiled-coil stretches lie at residues 585-820 (LLRT…GRRS) and 886-1645 (DSGV…SVAV). 4 positions are modified to phosphoserine: serine 887, serine 949, serine 1584, and serine 1657. Residues 1557-1756 (ELDFLREENH…ELAVLVSGQK (200 aa)) form an interacts with BFSP2 and VIM region. Plectin repeat units lie at residues 1651 to 1685 (ENHLRRSIVVIHPDTGRELSPEEAHRAGLIDWNMF) and 1700 to 1735 (VKGPNGESSVIHDRKSGKKFSIEEALQSGRLTPAQY).

This sequence belongs to the plakin or cytolinker family. As to quaternary structure, homodimer or a heterodimer with EVPL. Found in a complex composed of PPL (via C-terminal linker domain), BFSP1 and BFSP2 in the retinal lens. Within the complex interacts (via C-terminal linker domain) with BFSP2. Interacts with VIM. Binds to the PH domain of AKT1. Interacts with FCGR1A. May interact with PPHLN1. Expressed in stratified squamous epithelia and in some other epithelia.

It localises to the cell junction. It is found in the desmosome. The protein localises to the cytoplasm. Its subcellular location is the cytoskeleton. The protein resides in the cell membrane. Its function is as follows. Component of the cornified envelope of keratinocytes. May link the cornified envelope to desmosomes and intermediate filaments. May act as a localization signal in PKB/AKT-mediated signaling. The chain is Periplakin (PPL) from Homo sapiens (Human).